Consider the following 596-residue polypeptide: Two-component response regulator ARR12 (596 aa).

Residues 18–133 (RVLAVDDDQT…ELKNIWQHVV (116 aa)) form the Response regulatory domain. 4-aspartylphosphate is present on D69. Over residues 138–153 (DKNRGSNNNGDKRDGS) the composition is skewed to basic and acidic residues. The disordered stretch occupies residues 138–192 (DKNRGSNNNGDKRDGSGNEGVGNSDQNNGKGNRKRKDQYNEDEDEDRDDNDDSCA). The segment covering 158–167 (VGNSDQNNGK) has biased composition (polar residues). Positions 177 to 189 (NEDEDEDRDDNDD) are enriched in acidic residues. The Nuclear localization signal signature appears at 194-197 (KKQR). Residues 197-247 (RVVWTVELHKKFVAAVNQLGYEKAMPKKILDLMNVEKLTRENVASHLQKFR) constitute a DNA-binding region (myb-like GARP). Positions 437–467 (NAVSSSTHPPPPAHNSNSINHQFDVSPLPHS) are disordered. Residues 450 to 459 (HNSNSINHQF) are compositionally biased toward polar residues.

This sequence belongs to the ARR family. Type-B subfamily. As to quaternary structure, binds the target DNA as a monomer. Two-component system major event consists of a His-to-Asp phosphorelay between a sensor histidine kinase (HK) and a response regulator (RR). In plants, the His-to-Asp phosphorelay involves an additional intermediate named Histidine-containing phosphotransfer protein (HPt). This multistep phosphorelay consists of a His-Asp-His-Asp sequential transfer of a phosphate group between first a His and an Asp of the HK protein, followed by the transfer to a conserved His of the HPt protein and finally the transfer to an Asp in the receiver domain of the RR protein. As to expression, detected in the whole plant. Predominantly expressed in leaves. Expressed at the root transition zone.

Its subcellular location is the nucleus. Its function is as follows. Transcriptional activator that binds specifically to the DNA sequence 5'-[AG]GATT-3'. Functions as a response regulator involved in His-to-Asp phosphorelay signal transduction system. Phosphorylation of the Asp residue in the receiver domain activates the ability of the protein to promote the transcription of target genes. Could directly activate some type-A response regulators in response to cytokinins. Involved in the root-meristem size determination through the regulation of cell differentiation. Involved in activating SHY2 during meristem growth and controls PIN expression via activation of SHY2. This Arabidopsis thaliana (Mouse-ear cress) protein is Two-component response regulator ARR12 (ARR12).